Consider the following 839-residue polypeptide: Glycerol-3-phosphate acyltransferase (839 aa).

Residues 309 to 314 carry the HXXXXD motif motif; that stretch reads CHRSHI.

This sequence belongs to the GPAT/DAPAT family.

It localises to the cell inner membrane. The catalysed reaction is sn-glycerol 3-phosphate + an acyl-CoA = a 1-acyl-sn-glycero-3-phosphate + CoA. The protein operates within phospholipid metabolism; CDP-diacylglycerol biosynthesis; CDP-diacylglycerol from sn-glycerol 3-phosphate: step 1/3. The protein is Glycerol-3-phosphate acyltransferase of Pseudomonas fluorescens (strain SBW25).